The sequence spans 975 residues: Glycine dehydrogenase (decarboxylating) (975 aa).

K723 bears the N6-(pyridoxal phosphate)lysine mark.

Belongs to the GcvP family. In terms of assembly, the glycine cleavage system is composed of four proteins: P, T, L and H. The cofactor is pyridoxal 5'-phosphate.

The catalysed reaction is N(6)-[(R)-lipoyl]-L-lysyl-[glycine-cleavage complex H protein] + glycine + H(+) = N(6)-[(R)-S(8)-aminomethyldihydrolipoyl]-L-lysyl-[glycine-cleavage complex H protein] + CO2. The glycine cleavage system catalyzes the degradation of glycine. The P protein binds the alpha-amino group of glycine through its pyridoxal phosphate cofactor; CO(2) is released and the remaining methylamine moiety is then transferred to the lipoamide cofactor of the H protein. This is Glycine dehydrogenase (decarboxylating) from Burkholderia lata (strain ATCC 17760 / DSM 23089 / LMG 22485 / NCIMB 9086 / R18194 / 383).